The primary structure comprises 227 residues: Phosphoribosylformylglycinamidine synthase subunit PurQ (227 aa).

The 223-residue stretch at 3–225 (FAVIVLPGSN…VKNWRETHVT (223 aa)) folds into the Glutamine amidotransferase type-1 domain. C86 functions as the Nucleophile in the catalytic mechanism. Catalysis depends on residues H194 and E196.

In terms of assembly, part of the FGAM synthase complex composed of 1 PurL, 1 PurQ and 2 PurS subunits.

The protein localises to the cytoplasm. The catalysed reaction is N(2)-formyl-N(1)-(5-phospho-beta-D-ribosyl)glycinamide + L-glutamine + ATP + H2O = 2-formamido-N(1)-(5-O-phospho-beta-D-ribosyl)acetamidine + L-glutamate + ADP + phosphate + H(+). It carries out the reaction L-glutamine + H2O = L-glutamate + NH4(+). It functions in the pathway purine metabolism; IMP biosynthesis via de novo pathway; 5-amino-1-(5-phospho-D-ribosyl)imidazole from N(2)-formyl-N(1)-(5-phospho-D-ribosyl)glycinamide: step 1/2. Its function is as follows. Part of the phosphoribosylformylglycinamidine synthase complex involved in the purines biosynthetic pathway. Catalyzes the ATP-dependent conversion of formylglycinamide ribonucleotide (FGAR) and glutamine to yield formylglycinamidine ribonucleotide (FGAM) and glutamate. The FGAM synthase complex is composed of three subunits. PurQ produces an ammonia molecule by converting glutamine to glutamate. PurL transfers the ammonia molecule to FGAR to form FGAM in an ATP-dependent manner. PurS interacts with PurQ and PurL and is thought to assist in the transfer of the ammonia molecule from PurQ to PurL. The chain is Phosphoribosylformylglycinamidine synthase subunit PurQ from Bacillus subtilis (strain 168).